A 207-amino-acid polypeptide reads, in one-letter code: ATP synthase subunit b 2 (207 aa).

A helical membrane pass occupies residues 53–72 (TYASQLLWLVITFSVFYLLM).

The protein belongs to the ATPase B chain family. In terms of assembly, F-type ATPases have 2 components, F(1) - the catalytic core - and F(0) - the membrane proton channel. F(1) has five subunits: alpha(3), beta(3), gamma(1), delta(1), epsilon(1). F(0) has three main subunits: a(1), b(2) and c(10-14). The alpha and beta chains form an alternating ring which encloses part of the gamma chain. F(1) is attached to F(0) by a central stalk formed by the gamma and epsilon chains, while a peripheral stalk is formed by the delta and b chains.

The protein resides in the cell inner membrane. Functionally, f(1)F(0) ATP synthase produces ATP from ADP in the presence of a proton or sodium gradient. F-type ATPases consist of two structural domains, F(1) containing the extramembraneous catalytic core and F(0) containing the membrane proton channel, linked together by a central stalk and a peripheral stalk. During catalysis, ATP synthesis in the catalytic domain of F(1) is coupled via a rotary mechanism of the central stalk subunits to proton translocation. Component of the F(0) channel, it forms part of the peripheral stalk, linking F(1) to F(0). The b'-subunit is a diverged and duplicated form of b found in plants and photosynthetic bacteria. The polypeptide is ATP synthase subunit b 2 (atpF2) (Rhizobium leguminosarum bv. trifolii (strain WSM2304)).